Reading from the N-terminus, the 295-residue chain is Succinate dehydrogenase [ubiquinone] iron-sulfur subunit, mitochondrial (295 aa).

A 2Fe-2S ferredoxin-type domain is found at 67–144 (EKPRLQSYTL…DTKIYPLPHM (78 aa)). Residues C106, C111, C114, and C126 each contribute to the [2Fe-2S] cluster site. Residues 185–215 (ERRRLDGLYECILCACCSTSCPSYWWNQDEY) form the 4Fe-4S ferredoxin-type domain. 3 residues coordinate [4Fe-4S] cluster: C195, C198, and C201. A [3Fe-4S] cluster-binding site is contributed by C205. Residue W210 coordinates a ubiquinone. 2 residues coordinate [3Fe-4S] cluster: C252 and C258. Residue C262 coordinates [4Fe-4S] cluster.

This sequence belongs to the succinate dehydrogenase/fumarate reductase iron-sulfur protein family. Component of complex II composed of four subunits: a flavoprotein (FP), an iron-sulfur protein (IP), and a cytochrome b composed of a large and a small subunit. [2Fe-2S] cluster serves as cofactor. Requires [3Fe-4S] cluster as cofactor. It depends on [4Fe-4S] cluster as a cofactor.

The protein resides in the mitochondrion inner membrane. The catalysed reaction is a quinone + succinate = fumarate + a quinol. It functions in the pathway carbohydrate metabolism; tricarboxylic acid cycle; fumarate from succinate (eukaryal route): step 1/1. Functionally, iron-sulfur protein (IP) subunit of succinate dehydrogenase (SDH) that is involved in complex II of the mitochondrial electron transport chain and is responsible for transferring electrons from succinate to ubiquinone (coenzyme Q). In Mycosarcoma maydis (Corn smut fungus), this protein is Succinate dehydrogenase [ubiquinone] iron-sulfur subunit, mitochondrial (SDH2).